The following is a 1653-amino-acid chain: Ciliary rootlet coiled-coil protein 2 (1653 aa).

Positions 1 to 17 (MSSASSEPGNGDASQQP) are enriched in polar residues. A disordered region spans residues 1 to 57 (MSSASSEPGNGDASQQPLLGLDTVIQRLEDTILSPTASREDRALTVRGEGRQASPTP). Residues 38–50 (SREDRALTVRGEG) show a composition bias toward basic and acidic residues. Coiled coils occupy residues 86-145 (VARV…SELE) and 310-351 (KVAL…LVAQ). The segment at 367-396 (LGEPRRPLRSPQRATSPHQGASPPHICSPA) is disordered. Positions 423–1215 (LKSSQALVAS…QRKLAEVEAA (793 aa)) form a coiled coil. The interval 1302-1356 (GLQRQSPWASPEQPGSPTKGSDSSQALPGQQGTSPPARPHSPLRWPSPTPGGRSS) is disordered. Over residues 1304–1335 (QRQSPWASPEQPGSPTKGSDSSQALPGQQGTS) the composition is skewed to polar residues. The stretch at 1361 to 1570 (VATVQDILRD…QAQMTEMEQA (210 aa)) forms a coiled coil.

This sequence belongs to the rootletin family.

The protein is Ciliary rootlet coiled-coil protein 2 of Homo sapiens (Human).